Consider the following 360-residue polypeptide: D-alanine--D-alanine ligase (360 aa).

The 210-residue stretch at 134-343 (KILAQRVGVP…YTELITRLIQ (210 aa)) folds into the ATP-grasp domain. 169–224 (AEKLGHDMFVKPSNQGSSVGVNHVTNAEEYAAALEEAFKYDDKVLVEETVPGTEVE) is a binding site for ATP. Residues Asp-297, Glu-310, and Asn-312 each contribute to the Mg(2+) site.

The protein belongs to the D-alanine--D-alanine ligase family. It depends on Mg(2+) as a cofactor. The cofactor is Mn(2+).

It localises to the cytoplasm. The catalysed reaction is 2 D-alanine + ATP = D-alanyl-D-alanine + ADP + phosphate + H(+). It functions in the pathway cell wall biogenesis; peptidoglycan biosynthesis. Functionally, cell wall formation. The chain is D-alanine--D-alanine ligase from Lactobacillus acidophilus (strain ATCC 700396 / NCK56 / N2 / NCFM).